Reading from the N-terminus, the 624-residue chain is Kelch-like protein diablo (624 aa).

The span at 1-21 shows a compositional bias: low complexity; sequence MGDPLLPGSTGLGSGPAAAAT. Residues 1-55 are disordered; sequence MGDPLLPGSTGLGSGPAAAATGGSGTTGTGLGSGGTSGAERPPSPARLTHTSEKH. Residues 22-37 are compositionally biased toward gly residues; the sequence is GGSGTTGTGLGSGGTS. The BTB domain maps to 73-140; sequence CDVVLNVGGR…CYTAHIIVEE (68 aa). One can recognise a BACK domain in the interval 175–277; the sequence is CLGIRAFADT…SPKFLVGTVG (103 aa). Kelch repeat units lie at residues 324–370, 372–418, 419–465, 467–512, 514–559, and 560–606; these read VLFA…VLND, LYAV…VLDG, FLYA…VLSG, LYAI…VFNN, IYAV…VVNG, and QLYA…VMRA.

It participates in protein modification; protein ubiquitination. Functionally, probable substrate-specific adapter of an E3 ubiquitin-protein ligase complex which mediates the ubiquitination and subsequent proteasomal degradation of target proteins. May have a role in synapse differentiation and growth. The sequence is that of Kelch-like protein diablo from Drosophila virilis (Fruit fly).